A 930-amino-acid polypeptide reads, in one-letter code: MVYQSEFALETEMMEQLKSNGYETVTIRNEQQLLDNFRSILNERHADKLNGDPLTDKEFQRLLTMINGKGIFESARILRDKMPLKRDDESEVYLSFLDTRHWCQNKFQITNQVSVDDTYKARYDVTILINGLPLVQIELKRRGIDINEAFNQVMRYRKQNYTGLFRYIQLFIISNGIDTRYISNNDGEIYKSHMFYWSDKENNRINTLNEFTETFLRPCHIAKMISRYMILNETDNILMAMRPYQVHAVEALIHQATETSNNGYIWHTTGSGKTLTSFKASQVLSEQDDIKKVIFLVDRKDLDSQTEEEFNKFSKGSVDKTNNTAQLVKQLKDKSLPLIVTTIQKMSKAIQNNAEALDQYKTDKVVFIIDECHRSQFGDMHRIVRQHFNNAQYFGFTGTPRFEENQSQDGRSTADIFGRCLHTYLIKDAIHDGNVLGFSVDYINTIKAQNIDTETDELVEGINTDEVWLSDQRVELIARHITENHDKYTRNRQYSAIFTVQSIPALVKYYDAFKKISKDYEHPLKVAGVFSYAANEERNEGEVDEAHSRGKLEEVIQDYNLNFGTNFSTDTFQEYFNHISKNVKKGVKDNKIDVLIVVNMFLTGFDSKVLNTLYVDKNLKYHDLIQAYSRTNRVEKETKPFGKIVNYRDLKQNTDNALKLFSQTEDTDRVLMRDYDEYKAEFVDALAELKAVALKPQDMDQVQDENEKKAFVEAFRLVSKLVLRLKAFDEFDFTKANIGMNEQEFEDYKSKYFAIYDEVKPKRGEVEKVSILNDIDFEIEILRNDRINVSYIMDLVRQIDLKDKAEQQRNRDQIRRMLDNADDPTLRLKRDLLREFIDDVIPELSEEDNIDEAYILFENAKRESEFNQFAQQQAVDEQVLKDITGEYEYSGIVNQDHLKELVGDKKLREKRQTKKAVTSFVEEVSEKYSS.

The Helicase ATP-binding domain occupies 254–418 (HQATETSNNG…DGRSTADIFG (165 aa)). ATP is bound at residue 268–274 (TTGSGKT).

This sequence belongs to the HsdR family. In terms of assembly, the type I restriction/modification system is composed of three polypeptides R, M and S.

The enzyme catalyses Endonucleolytic cleavage of DNA to give random double-stranded fragments with terminal 5'-phosphates, ATP is simultaneously hydrolyzed.. The restriction (R) subunit of a type I restriction enzyme that recognizes an undetermined sequence and cleaves a random distance away. Subunit R is required for both nuclease and ATPase activities, but not for modification. After locating a non-methylated recognition site, the enzyme complex serves as a molecular motor that translocates DNA in an ATP-dependent manner until a collision occurs that triggers cleavage. The sequence is that of Type I restriction enzyme SsaAORF53P endonuclease subunit from Staphylococcus saprophyticus subsp. saprophyticus (strain ATCC 15305 / DSM 20229 / NCIMB 8711 / NCTC 7292 / S-41).